The sequence spans 310 residues: MRNSLYKKNIISINDLQRNELELVLNKSAMLKRTPQPNLLKNKVIASCFFEASTRTRLSFETAIYRLGASIVGFSDGNNISLEKKGETLTDTISVISSYVDAIIIRHPQEGSARLAAEFSNKKPIFNAGDGANQHPTQTLLDLFTIQETQNRLTQLNIAIVGDLKYGRTVHSLTQALAKFKHNKFYFISPDALKMPNYINNMLDKKEIYWKRHNNIEEIISEIDILYMTRIQKERLDSTEYANAKSKFVLRAAILKNARNNMKILHPLPRIDEIDRDVDYTPYAWYFKQAANGIYARQAILSLVLIEKHL.

Residues Arg-55 and Thr-56 each contribute to the carbamoyl phosphate site. Residue Lys-85 participates in L-aspartate binding. Positions 106, 135, and 138 each coordinate carbamoyl phosphate. 2 residues coordinate L-aspartate: Arg-168 and Arg-230. Residues Leu-268 and Pro-269 each contribute to the carbamoyl phosphate site.

It belongs to the aspartate/ornithine carbamoyltransferase superfamily. ATCase family. As to quaternary structure, heterododecamer (2C3:3R2) of six catalytic PyrB chains organized as two trimers (C3), and six regulatory PyrI chains organized as three dimers (R2).

The enzyme catalyses carbamoyl phosphate + L-aspartate = N-carbamoyl-L-aspartate + phosphate + H(+). The protein operates within pyrimidine metabolism; UMP biosynthesis via de novo pathway; (S)-dihydroorotate from bicarbonate: step 2/3. In terms of biological role, catalyzes the condensation of carbamoyl phosphate and aspartate to form carbamoyl aspartate and inorganic phosphate, the committed step in the de novo pyrimidine nucleotide biosynthesis pathway. This Buchnera aphidicola subsp. Acyrthosiphon pisum (strain 5A) protein is Aspartate carbamoyltransferase catalytic subunit.